The sequence spans 442 residues: UDP-glycosyltransferase 78D4 (442 aa).

Residues 322–324, 339–347, and 361–364 each bind UDP-alpha-D-glucose; these read APQ, HGGWNSVLE, and FGDH.

It belongs to the UDP-glycosyltransferase family.

The polypeptide is UDP-glycosyltransferase 78D4 (UGT78D4) (Arabidopsis thaliana (Mouse-ear cress)).